The sequence spans 375 residues: Methylthioribose-1-phosphate isomerase (375 aa).

Substrate contacts are provided by residues 53–55 (RGA), R90, and Q202. The active-site Proton donor is the D243. 253 to 254 (NK) is a binding site for substrate.

This sequence belongs to the eIF-2B alpha/beta/delta subunits family. MtnA subfamily.

It catalyses the reaction 5-(methylsulfanyl)-alpha-D-ribose 1-phosphate = 5-(methylsulfanyl)-D-ribulose 1-phosphate. The protein operates within amino-acid biosynthesis; L-methionine biosynthesis via salvage pathway; L-methionine from S-methyl-5-thio-alpha-D-ribose 1-phosphate: step 1/6. Catalyzes the interconversion of methylthioribose-1-phosphate (MTR-1-P) into methylthioribulose-1-phosphate (MTRu-1-P). This chain is Methylthioribose-1-phosphate isomerase, found in Rhodospirillum centenum (strain ATCC 51521 / SW).